Here is a 166-residue protein sequence, read N- to C-terminus: Large ribosomal subunit protein uL10 (166 aa).

The protein belongs to the universal ribosomal protein uL10 family. In terms of assembly, part of the ribosomal stalk of the 50S ribosomal subunit. The N-terminus interacts with L11 and the large rRNA to form the base of the stalk. The C-terminus forms an elongated spine to which L12 dimers bind in a sequential fashion forming a multimeric L10(L12)X complex.

Forms part of the ribosomal stalk, playing a central role in the interaction of the ribosome with GTP-bound translation factors. This is Large ribosomal subunit protein uL10 (rplJ) from Streptococcus pyogenes serotype M1.